Reading from the N-terminus, the 205-residue chain is Thymidylate kinase (205 aa).

Position 10–17 (10–17) interacts with ATP; sequence GTEGVGKS.

The protein belongs to the thymidylate kinase family.

It catalyses the reaction dTMP + ATP = dTDP + ADP. Phosphorylation of dTMP to form dTDP in both de novo and salvage pathways of dTTP synthesis. The protein is Thymidylate kinase of Teredinibacter turnerae (strain ATCC 39867 / T7901).